Consider the following 1868-residue polypeptide: Protein TIC 214 (1868 aa).

6 helical membrane-spanning segments follow: residues 11–31 (LLLL…YYGF), 64–84 (FIMG…HLAL), 87–107 (PHTL…FFWN), 126–146 (LSIQ…HFIL), 166–186 (ILFV…LMKS), and 221–241 (IFSI…PSPI). Positions 248–276 (ESSKGEEKKKTEKERDVEMETISKTKKIE) are enriched in basic and acidic residues. 5 disordered regions span residues 248 to 277 (ESSK…KIEQ), 617 to 643 (FDFE…GIRS), 658 to 700 (DEDT…QAEE), 782 to 806 (TSDY…KRKE), and 1537 to 1607 (YIDP…RKKK). Residues 617–636 (FDFEEEEEEEEEEDDEEEPT) show a composition bias toward acidic residues. Positions 674–683 (AKNSDQAKNS) are enriched in polar residues. 3 stretches are compositionally biased toward basic and acidic residues: residues 684-700 (DQAK…QAEE), 789-806 (GAKE…KRKE), and 1537-1576 (YIDP…ERQH).

Belongs to the TIC214 family. As to quaternary structure, part of the Tic complex.

Its subcellular location is the plastid. The protein localises to the chloroplast inner membrane. In terms of biological role, involved in protein precursor import into chloroplasts. May be part of an intermediate translocation complex acting as a protein-conducting channel at the inner envelope. The protein is Protein TIC 214 of Nuphar advena (Common spatterdock).